Reading from the N-terminus, the 458-residue chain is UDP-N-acetylmuramoylalanine--D-glutamate ligase (458 aa).

Residue 124–130 (GSDGKTT) participates in ATP binding.

Belongs to the MurCDEF family.

It localises to the cytoplasm. The enzyme catalyses UDP-N-acetyl-alpha-D-muramoyl-L-alanine + D-glutamate + ATP = UDP-N-acetyl-alpha-D-muramoyl-L-alanyl-D-glutamate + ADP + phosphate + H(+). The protein operates within cell wall biogenesis; peptidoglycan biosynthesis. Functionally, cell wall formation. Catalyzes the addition of glutamate to the nucleotide precursor UDP-N-acetylmuramoyl-L-alanine (UMA). The polypeptide is UDP-N-acetylmuramoylalanine--D-glutamate ligase (Clostridium botulinum (strain Langeland / NCTC 10281 / Type F)).